The chain runs to 104 residues: Small ribosomal subunit protein uS10 (104 aa).

This sequence belongs to the universal ribosomal protein uS10 family. As to quaternary structure, part of the 30S ribosomal subunit.

Functionally, involved in the binding of tRNA to the ribosomes. The chain is Small ribosomal subunit protein uS10 from Aliarcobacter butzleri (strain RM4018) (Arcobacter butzleri).